The primary structure comprises 481 residues: Keratin, type II cuticular Hb1 (481 aa).

The tract at residues 1–106 is head; the sequence is MTCGSGFCGR…PNAQCVKHEE (106 aa). An IF rod domain is found at 106–417; that stretch reads EKEQIKCLNS…RLLEGEEQRL (312 aa). The tract at residues 107 to 141 is coil 1A; that stretch reads KEQIKCLNSKFAAFIDKVRFLEQQNKLLETKWQFY. The interval 142–151 is linker 1; it reads QNRKCCESNM. Residues 152–252 are coil 1B; that stretch reads EPLFEGYIEA…YDEETRILHS (101 aa). Lysine 212 participates in a covalent cross-link: Glycyl lysine isopeptide (Lys-Gly) (interchain with G-Cter in SUMO1). Positions 253–269 are linker 12; the sequence is HISDTSIVVKMDNSRDL. Residues 270 to 413 form a coil 2 region; sequence NMDCVVAEIK…TTYRRLLEGE (144 aa). The tract at residues 414 to 481 is tail; the sequence is EQRLCEGVGA…GSAVSCGRKC (68 aa).

Belongs to the intermediate filament family. Heterotetramer of two type I and two type II keratins. Expressed in dorsal skin.

In Mus musculus (Mouse), this protein is Keratin, type II cuticular Hb1.